The following is a 644-amino-acid chain: Exoribonuclease 2 (644 aa).

Positions 189-516 (REDLTSLDFV…NHRLLKAVIK (328 aa)) constitute an RNB domain. One can recognise an S1 motif domain in the interval 561–643 (GTRFAAEIVD…ETRSIIARPV (83 aa)).

It belongs to the RNR ribonuclease family. RNase II subfamily.

The protein resides in the cytoplasm. The enzyme catalyses Exonucleolytic cleavage in the 3'- to 5'-direction to yield nucleoside 5'-phosphates.. Functionally, involved in mRNA degradation. Hydrolyzes single-stranded polyribonucleotides processively in the 3' to 5' direction. The protein is Exoribonuclease 2 of Shigella flexneri serotype 5b (strain 8401).